Consider the following 148-residue polypeptide: 3-dehydroquinate dehydratase (148 aa).

The Proton acceptor role is filled by Y24. Substrate-binding residues include N80, H86, and D93. H106 serves as the catalytic Proton donor. Substrate contacts are provided by residues 107–108 and R117; that span reads IS.

This sequence belongs to the type-II 3-dehydroquinase family. In terms of assembly, homododecamer.

It catalyses the reaction 3-dehydroquinate = 3-dehydroshikimate + H2O. Its pathway is metabolic intermediate biosynthesis; chorismate biosynthesis; chorismate from D-erythrose 4-phosphate and phosphoenolpyruvate: step 3/7. Catalyzes a trans-dehydration via an enolate intermediate. In Acidovorax ebreus (strain TPSY) (Diaphorobacter sp. (strain TPSY)), this protein is 3-dehydroquinate dehydratase.